We begin with the raw amino-acid sequence, 122 residues long: Insulin-like 3 (122 aa).

An N-terminal signal peptide occupies residues 1-15; it reads MRAPLLLMLLALGSA. Cystine bridges form between C29–C107, C41–C120, and C106–C111.

Belongs to the insulin family. As to quaternary structure, heterodimer of a B chain and an A chain linked by two disulfide bonds. In terms of tissue distribution, expressed exclusively in Leydig cells of the testis.

The protein resides in the secreted. Its function is as follows. Seems to play a role in testicular function. May be a trophic hormone with a role in testicular descent in fetal life. Is a ligand for LGR8 receptor. In Mus musculus (Mouse), this protein is Insulin-like 3 (Insl3).